The sequence spans 519 residues: Pleckstrin homology domain-containing family A member 8 (519 aa).

In terms of domain architecture, PH spans 1–93; that stretch reads MEGVLYKWTN…WLVALGSAKA (93 aa). Residue Thr139 is modified to Phosphothreonine. Ser145 carries the post-translational modification Phosphoserine. The residue at position 153 (Thr153) is a Phosphothreonine. The interval 274–302 is disordered; sequence GEDNLGNHDSSLAQPASDSSSSPPESHWE. A compositionally biased stretch (low complexity) spans 282 to 298; it reads DSSLAQPASDSSSSPPE. The tract at residues 310-519 is glycolipid transfer protein homology domain; the sequence is TFFSTMNTSF…VHGLESDEVV (210 aa).

In terms of assembly, homodimer. Interacts with ARF1; the interaction together with phosphatidylinositol 4-phosphate binding is required for FAPP2 GlcCer transfer ability.

The protein localises to the golgi apparatus. It localises to the trans-Golgi network membrane. It is found in the membrane. Its function is as follows. Cargo transport protein that is required for apical transport from the trans-Golgi network (TGN). Transports AQP2 from the trans-Golgi network (TGN) to sites of AQP2 phosphorylation. Mediates the non-vesicular transport of glucosylceramide (GlcCer) from the trans-Golgi network (TGN) to the plasma membrane and plays a pivotal role in the synthesis of complex glycosphingolipids. Binding of both phosphatidylinositol 4-phosphate (PIP) and ARF1 are essential for the GlcCer transfer ability. Also required for primary cilium formation, possibly by being involved in the transport of raft lipids to the apical membrane, and for membrane tubulation. This chain is Pleckstrin homology domain-containing family A member 8 (PLEKHA8), found in Canis lupus familiaris (Dog).